Here is a 159-residue protein sequence, read N- to C-terminus: Transcriptional repressor NrdR (159 aa).

Residues 1–21 (MRCPKCQHNKSNVIDSRQAED) form a disordered region. Residues 3–34 (CPKCQHNKSNVIDSRQAEDGNTIRRRRECDAC) fold into a zinc finger. An ATP-cone domain is found at 49-139 (LLVVKKDGTR…VYRSFKDVDE (91 aa)).

Belongs to the NrdR family. Zn(2+) is required as a cofactor.

Negatively regulates transcription of bacterial ribonucleotide reductase nrd genes and operons by binding to NrdR-boxes. This is Transcriptional repressor NrdR from Streptococcus thermophilus (strain ATCC BAA-491 / LMD-9).